Consider the following 610-residue polypeptide: UvrABC system protein C (610 aa).

The GIY-YIG domain occupies 16-94 (SQPGVYRMYD…IKLYQPRYNV (79 aa)). The UVR domain maps to 204-239 (DQVLTQLIARMEKASQDLAFEEAARIRDQIQAVRRV).

The protein belongs to the UvrC family. Interacts with UvrB in an incision complex.

The protein localises to the cytoplasm. Its function is as follows. The UvrABC repair system catalyzes the recognition and processing of DNA lesions. UvrC both incises the 5' and 3' sides of the lesion. The N-terminal half is responsible for the 3' incision and the C-terminal half is responsible for the 5' incision. The polypeptide is UvrABC system protein C (Salmonella paratyphi C (strain RKS4594)).